Here is a 631-residue protein sequence, read N- to C-terminus: Nucleoside triphosphatase I (631 aa).

The Helicase ATP-binding domain maps to 42–204 (FLGLDSMHSL…TMLVNLLRPG (163 aa)). 55-62 (HETGVGKT) provides a ligand contact to ATP. Residues 141 to 144 (DECH) carry the DEXH box motif. A Helicase C-terminal domain is found at 367-532 (KFIDVCLGIL…EFVQLFRVFK (166 aa)). The binding to the cap-specific mRNA (nucleoside-2'-O-)-methyltransferase stretch occupies residues 457–524 (DIFILDMTWN…EIIQSKSKEF (68 aa)).

This sequence belongs to the helicase family. NPH I subfamily. Monomer. Interacts (via C-terminus) with RAP94/OPG109 (via N-terminus). Interacts with the cap-specific mRNA (nucleoside-2'-O-)-methyltransferase OPG102.

Its subcellular location is the virion. The enzyme catalyses a ribonucleoside 5'-triphosphate + H2O = a ribonucleoside 5'-diphosphate + phosphate + H(+). Its function is as follows. DNA-dependent ATPase that acts as a 5' to 3' translocase on single-stranded DNA and thereby plays a role in transcription termination of viral early genes. Uses forward translocation in concert with the viral RNA polymerase RAP94/OPG109 subunit and the capping enzyme/VTF to catalyze release of UUUUUNU-containing nascent RNA from the elongation complex. In addition, acts as a positive elongation factor to assist transcription through problematic sequences. The protein is Nucleoside triphosphatase I (OPG123) of Variola virus (isolate Human/India/Ind3/1967) (VARV).